The chain runs to 388 residues: Cystathionine gamma-synthase (388 aa).

Residue Lys-208 is modified to N6-(pyridoxal phosphate)lysine.

It belongs to the trans-sulfuration enzymes family. In terms of assembly, homotetramer. It depends on pyridoxal 5'-phosphate as a cofactor.

Its subcellular location is the cytoplasm. The enzyme catalyses O-succinyl-L-homoserine + L-cysteine = L,L-cystathionine + succinate + H(+). Functionally, catalyzes the formation of L-cystathionine from O-succinyl-L-homoserine (OSHS) and L-cysteine, via a gamma-replacement reaction. In the absence of thiol, catalyzes gamma-elimination to form 2-oxobutanoate, succinate and ammonia. This chain is Cystathionine gamma-synthase (metB), found in Mycobacterium leprae (strain TN).